The sequence spans 458 residues: Argininosuccinate lyase (458 aa).

Belongs to the lyase 1 family. Argininosuccinate lyase subfamily.

The protein localises to the cytoplasm. The catalysed reaction is 2-(N(omega)-L-arginino)succinate = fumarate + L-arginine. Its pathway is amino-acid biosynthesis; L-arginine biosynthesis; L-arginine from L-ornithine and carbamoyl phosphate: step 3/3. This chain is Argininosuccinate lyase, found in Buchnera aphidicola subsp. Baizongia pistaciae (strain Bp).